Here is a 339-residue protein sequence, read N- to C-terminus: Putative zinc metalloprotease CA_C1796 (339 aa).

A Zn(2+)-binding site is contributed by His-20. The active site involves Glu-21. His-24 contributes to the Zn(2+) binding site. Transmembrane regions (helical) follow at residues Leu-91–Gly-113, Gln-275–Phe-297, and Val-310–Ile-330. Positions Ile-99–Gly-177 constitute a PDZ domain.

The protein belongs to the peptidase M50B family. Zn(2+) serves as cofactor.

The protein localises to the cell membrane. In Clostridium acetobutylicum (strain ATCC 824 / DSM 792 / JCM 1419 / IAM 19013 / LMG 5710 / NBRC 13948 / NRRL B-527 / VKM B-1787 / 2291 / W), this protein is Putative zinc metalloprotease CA_C1796.